The following is a 223-amino-acid chain: Translation initiation factor 6 (223 aa).

It belongs to the eIF-6 family.

Functionally, binds to the 50S ribosomal subunit and prevents its association with the 30S ribosomal subunit to form the 70S initiation complex. The sequence is that of Translation initiation factor 6 from Saccharolobus islandicus (strain Y.N.15.51 / Yellowstone #2) (Sulfolobus islandicus).